Reading from the N-terminus, the 358-residue chain is Programmed cell death protein 2-like (358 aa).

Residue alanine 2 is modified to N-acetylalanine. Serine 20 bears the Phosphoserine mark. The residue at position 22 (threonine 22) is a Phosphothreonine.

As to expression, higher expression in lung, colon, mammary gland, cervix, stomach and small intestine.

Over-expression suppresses AP1, CREB, NFAT, and NF-kB transcriptional activation, and delays cell cycle progression at S phase. In Homo sapiens (Human), this protein is Programmed cell death protein 2-like (PDCD2L).